A 38-amino-acid chain; its full sequence is Photosystem I reaction center subunit IX (38 aa).

The helical transmembrane segment at Phe-4–Ile-24 threads the bilayer.

The protein belongs to the PsaJ family.

It localises to the cellular thylakoid membrane. Functionally, may help in the organization of the PsaE and PsaF subunits. The sequence is that of Photosystem I reaction center subunit IX from Synechococcus sp. (strain CC9605).